A 98-amino-acid chain; its full sequence is DNA-binding protein Fis (98 aa).

The segment at residues 74–93 (QTRAATMLGINRGTLRKKLK) is a DNA-binding region (H-T-H motif).

This sequence belongs to the transcriptional regulatory Fis family. As to quaternary structure, homodimer.

In terms of biological role, activates ribosomal RNA transcription. Plays a direct role in upstream activation of rRNA promoters. This chain is DNA-binding protein Fis, found in Mannheimia haemolytica (Pasteurella haemolytica).